The sequence spans 63 residues: Large ribosomal subunit protein bL28 (63 aa).

It belongs to the bacterial ribosomal protein bL28 family.

This is Large ribosomal subunit protein bL28 from Clostridium perfringens (strain SM101 / Type A).